Reading from the N-terminus, the 179-residue chain is MVAINSNGFVTTTVEELLRWGRRNSLWPVTIGLACCAIEMMHTAASRFDLDRLGVIFRASPRQADVLIVAGTVVNKVAPMLKLIWDQMPDPKWCISMGGCASAGGPFPTYSTLQGVDRIIPVDVYIPGCPPTPQGLIYGILQLQRKIKEQGITKYDKLFADFNREIEKEGIFVPRELKV.

Cys35, Cys36, Cys100, and Cys129 together coordinate [4Fe-4S] cluster.

The protein belongs to the complex I 20 kDa subunit family. NDH-1 is composed of 14 different subunits. Subunits NuoB, C, D, E, F, and G constitute the peripheral sector of the complex. [4Fe-4S] cluster is required as a cofactor.

It is found in the cell inner membrane. The catalysed reaction is a quinone + NADH + 5 H(+)(in) = a quinol + NAD(+) + 4 H(+)(out). NDH-1 shuttles electrons from NADH, via FMN and iron-sulfur (Fe-S) centers, to quinones in the respiratory chain. Couples the redox reaction to proton translocation (for every two electrons transferred, four hydrogen ions are translocated across the cytoplasmic membrane), and thus conserves the redox energy in a proton gradient. The protein is NADH-quinone oxidoreductase subunit B of Aquifex aeolicus (strain VF5).